We begin with the raw amino-acid sequence, 264 residues long: Putative hydro-lyase cgR_2449 (264 aa).

This sequence belongs to the D-glutamate cyclase family.

The chain is Putative hydro-lyase cgR_2449 from Corynebacterium glutamicum (strain R).